We begin with the raw amino-acid sequence, 365 residues long: Pectate trisaccharide-lyase (365 aa).

The N-terminal stretch at 1–25 is a signal peptide; sequence MRFSRVVSLVLLLVFTAVLTGAVKA. The Ca(2+) site is built by Asp-142, Asp-164, and Asp-168. The PbH1 1 repeat unit spans residues 149–171; the sequence is SHHIWIDHCTFVNGNDGAVDIKK. The active site involves Arg-222. A PbH1 2 repeat occupies 261-287; the sequence is GAKVHVEGNYFMGYGAVMAEAGIAFLP.

This sequence belongs to the polysaccharide lyase 1 family. Homotetramer. It depends on Ca(2+) as a cofactor.

The protein localises to the secreted. The enzyme catalyses eliminative cleavage of unsaturated trigalacturonate as the major product from the reducing end of polygalacturonic acid/pectate.. In terms of biological role, cleaves unsaturated trigalacturonate from pectin. Activity is highest towards polygalacturonic acid, activity on methylated pectins decreases with an increasing degree of methylation. This Thermotoga sp. (strain RQ2) protein is Pectate trisaccharide-lyase.